An 831-amino-acid polypeptide reads, in one-letter code: Periplasmic nitrate reductase (831 aa).

Positions 1–35 (MTISDSRRTFLKASAAAATASAAGIPLANGTAAEA) form a signal peptide, tat-type signal. Residues 42 to 98 (IRWDKAACRFCGTGCSVLVGTKEGRVVATQGDPDAPVNRGLNCIKGYFLSKIMYGED) enclose the 4Fe-4S Mo/W bis-MGD-type domain. [4Fe-4S] cluster-binding residues include C49, C52, C56, and C84. Mo-bis(molybdopterin guanine dinucleotide) contacts are provided by residues K86, Q153, N178, C182, 215–222 (WGSNMAEM), 246–250 (STYEH), 265–267 (QTD), M375, Q379, N485, 511–512 (SD), K534, D561, and 721–730 (TGRVLEHWHS). A substrate-binding site is contributed by W797. Mo-bis(molybdopterin guanine dinucleotide) is bound by residues N805 and K822.

The protein belongs to the prokaryotic molybdopterin-containing oxidoreductase family. NasA/NapA/NarB subfamily. In terms of assembly, component of the periplasmic nitrate reductase NapAB complex composed of NapA and NapB. The cofactor is [4Fe-4S] cluster. Mo-bis(molybdopterin guanine dinucleotide) is required as a cofactor. Predicted to be exported by the Tat system. The position of the signal peptide cleavage has not been experimentally proven.

It localises to the periplasm. The catalysed reaction is 2 Fe(II)-[cytochrome] + nitrate + 2 H(+) = 2 Fe(III)-[cytochrome] + nitrite + H2O. Catalytic subunit of the periplasmic nitrate reductase complex NapAB. Receives electrons from NapB and catalyzes the reduction of nitrate to nitrite. The protein is Periplasmic nitrate reductase of Dinoroseobacter shibae (strain DSM 16493 / NCIMB 14021 / DFL 12).